The following is a 160-amino-acid chain: Glucagon-1 (160 aa).

The first 22 residues, 1 to 22 (MSDPGFLAAPVLLLLLVSLASA), serve as a signal peptide directing secretion. 3 consecutive propeptides follow at residues 23–40 (SLEQAASRDDDSAERPLS), 74–79 (GGSELQ), and 116–127 (DGGDHLAENSED). The tract at residues 112-132 (KSRRDGGDHLAENSEDKRHAE) is disordered.

This sequence belongs to the glucagon family.

The protein localises to the secreted. Promotes hydrolysis of glycogen and lipids, and raises the blood sugar level. This Petromyzon marinus (Sea lamprey) protein is Glucagon-1 (gcg1).